The primary structure comprises 228 residues: Small ribosomal subunit protein uS2 (228 aa).

Belongs to the universal ribosomal protein uS2 family.

This Buchnera aphidicola subsp. Baizongia pistaciae (strain Bp) protein is Small ribosomal subunit protein uS2.